Consider the following 292-residue polypeptide: uncharacterized protein (292 aa).

The chain crosses the membrane as a helical span at residues leucine 66–proline 86.

Its subcellular location is the host membrane. This is an uncharacterized protein from Alcelaphine herpesvirus 1 (strain C500) (AlHV-1).